The chain runs to 663 residues: Innate immunity activator protein (663 aa).

Residues Met-1–Pro-73 are disordered. Low complexity predominate over residues Glu-23–Gly-47. Over residues Ala-50–Arg-59 the composition is skewed to basic and acidic residues. A coiled-coil region spans residues Asn-117–Leu-147. The Nuclear localization signal (NLS) 1 motif lies at Pro-164–Ile-170. Disordered regions lie at residues Arg-219 to Trp-363 and Ile-375 to Arg-405. Positions Ala-225–Ser-246 are enriched in basic and acidic residues. Low complexity predominate over residues Glu-259–Leu-272. Positions Pro-282–Pro-298 are enriched in pro residues. Basic and acidic residues predominate over residues Thr-327–Ser-340. The short motif at Pro-332–Lys-338 is the Nuclear localization signal (NLS) 2 element. A compositionally biased stretch (polar residues) spans Pro-349–Ser-361. The short motif at Pro-422 to His-428 is the Nuclear localization signal (NLS) 3 element. Residues Pro-448–Leu-483 form a disordered region. Residues Glu-455–Pro-475 are compositionally biased toward low complexity.

In terms of assembly, interacts with IRAK1, NOD2 and RIPK2; the interaction takes place upon PRR stimulation. Interacts with YWHAQ/14-3-3T; the interaction increases upon PRR stimulation and is required for cellular signaling pathway activation and cytokine secretion. Interacts (via N-terminal domain) with CYTH1 and CYTH2 (via their N-terminal domains). Interacts with FBXW11 and BTRC; associates with SCF E3 ubiquitin-protein ligase complexes.

The protein resides in the nucleus. Its subcellular location is the cytoplasm. Functionally, expressed in peripheral macrophages and intestinal myeloid-derived cells, is required for optimal PRR (pattern recognition receptor)-induced signaling, cytokine secretion, and bacterial clearance. Upon stimulation of a broad range of PRRs (pattern recognition receptor) such as NOD2 or TLR2, TLR3, TLR4, TLR5, TLR7 and TLR9, associates with YWHAQ/14-3-3T, which in turn leads to the recruitment and activation of MAP kinases and NF-kappa-B signaling complexes that amplifies PRR-induced downstream signals and cytokine secretion. In the intestine, regulates adherens junction stability by regulating the degradation of CYTH1 and CYTH2, probably acting as substrate cofactor for SCF E3 ubiquitin-protein ligase complexes. Stabilizes adherens junctions by limiting CYTH1-dependent ARF6 activation. The protein is Innate immunity activator protein of Mus musculus (Mouse).